The following is a 295-amino-acid chain: Proline-rich proteoglycan 2 (295 aa).

Residues 1-16 (MLVVLLTAALLVLSSA) form the signal peptide. Residues 16–295 (AQGVDEEVVY…QSSFLWSFSA (280 aa)) are disordered. Low complexity predominate over residues 26 to 41 (EDSSQQLELEQQSQGH). Positions 48-58 (PPPGGLPPRPP) are enriched in pro residues. Over residues 62–78 (ENGDGDDNDDGDDDGSG) the composition is skewed to acidic residues. Pro residues-rich tracts occupy residues 100–187 (PPPA…PPGG) and 194–278 (QGPP…PQGP).

In terms of processing, contains glycosaminoglycans of chondroitin-sulfate and heparan types.

It localises to the secreted. This chain is Proline-rich proteoglycan 2 (Prpg2), found in Rattus norvegicus (Rat).